A 154-amino-acid polypeptide reads, in one-letter code: Myoglobin (154 aa).

Positions 2–148 (GLSDGEWQLV…FRNDIAAKYK (147 aa)) constitute a Globin domain. S4 is subject to Phosphoserine. H65 contacts nitrite. Residue H65 participates in O2 binding. At T68 the chain carries Phosphothreonine. H94 provides a ligand contact to heme b.

This sequence belongs to the globin family. In terms of assembly, monomeric.

The protein resides in the cytoplasm. It localises to the sarcoplasm. The catalysed reaction is Fe(III)-heme b-[protein] + nitric oxide + H2O = Fe(II)-heme b-[protein] + nitrite + 2 H(+). The enzyme catalyses H2O2 + AH2 = A + 2 H2O. Its function is as follows. Monomeric heme protein which primary function is to store oxygen and facilitate its diffusion within muscle tissues. Reversibly binds oxygen through a pentacoordinated heme iron and enables its timely and efficient release as needed during periods of heightened demand. Depending on the oxidative conditions of tissues and cells, and in addition to its ability to bind oxygen, it also has a nitrite reductase activity whereby it regulates the production of bioactive nitric oxide. Under stress conditions, like hypoxia and anoxia, it also protects cells against reactive oxygen species thanks to its pseudoperoxidase activity. The sequence is that of Myoglobin (MB) from Spalax ehrenbergi (Middle East blind mole rat).